The sequence spans 336 residues: Pyridoxal 5'-phosphate synthase subunit PdxS (336 aa).

Asp33 is a binding site for D-ribose 5-phosphate. Lys90 functions as the Schiff-base intermediate with D-ribose 5-phosphate in the catalytic mechanism. Gly162 is a binding site for D-ribose 5-phosphate. Residue Arg174 coordinates D-glyceraldehyde 3-phosphate. D-ribose 5-phosphate-binding positions include Gly260 and 281–282; that span reads GS.

This sequence belongs to the PdxS/SNZ family. In the presence of PdxT, forms a dodecamer of heterodimers.

The catalysed reaction is aldehydo-D-ribose 5-phosphate + D-glyceraldehyde 3-phosphate + L-glutamine = pyridoxal 5'-phosphate + L-glutamate + phosphate + 3 H2O + H(+). The protein operates within cofactor biosynthesis; pyridoxal 5'-phosphate biosynthesis. Functionally, catalyzes the formation of pyridoxal 5'-phosphate from ribose 5-phosphate (RBP), glyceraldehyde 3-phosphate (G3P) and ammonia. The ammonia is provided by the PdxT subunit. Can also use ribulose 5-phosphate and dihydroxyacetone phosphate as substrates, resulting from enzyme-catalyzed isomerization of RBP and G3P, respectively. This is Pyridoxal 5'-phosphate synthase subunit PdxS from Picrophilus torridus (strain ATCC 700027 / DSM 9790 / JCM 10055 / NBRC 100828 / KAW 2/3).